The chain runs to 109 residues: MVLKFSVSILWIQLAWVSTQLLEQSPQFLSIQEGENLTVYCNSSSVFSSLQWYRQEPGEGPVLLVTVVTGGEVKKLKRLTFQFGDARKDSSLHITAAQTGDTGLYLCAG.

The N-terminal stretch at 1–19 (MVLKFSVSILWIQLAWVST) is a signal peptide. The 90-residue stretch at 20–109 (QLLEQSPQFL…GDTGLYLCAG (90 aa)) folds into the Ig-like domain. N-linked (GlcNAc...) asparagine glycosylation is found at N36 and N42. C41 and C107 are joined by a disulfide.

Alpha-beta TR is a heterodimer composed of an alpha and beta chain; disulfide-linked. The alpha-beta TR is associated with the transmembrane signaling CD3 coreceptor proteins to form the TR-CD3 (TcR or TCR). The assembly of alpha-beta TR heterodimers with CD3 occurs in the endoplasmic reticulum where a single alpha-beta TR heterodimer associates with one CD3D-CD3E heterodimer, one CD3G-CD3E heterodimer and one CD247 homodimer forming a stable octameric structure. CD3D-CD3E and CD3G-CD3E heterodimers preferentially associate with TR alpha and TR beta chains, respectively. The association of the CD247 homodimer is the last step of TcR assembly in the endoplasmic reticulum and is required for transport to the cell surface. In terms of assembly, (Microbial infection) Interacts with Staphylococcus aureus enterotoxin H/entH.

The protein localises to the cell membrane. Functionally, v region of the variable domain of T cell receptor (TR) alpha chain that participates in the antigen recognition. Alpha-beta T cell receptors are antigen specific receptors which are essential to the immune response and are present on the cell surface of T lymphocytes. Recognize peptide-major histocompatibility (MH) (pMH) complexes that are displayed by antigen presenting cells (APC), a prerequisite for efficient T cell adaptive immunity against pathogens. Binding of alpha-beta TR to pMH complex initiates TR-CD3 clustering on the cell surface and intracellular activation of LCK that phosphorylates the ITAM motifs of CD3G, CD3D, CD3E and CD247 enabling the recruitment of ZAP70. In turn, ZAP70 phosphorylates LAT, which recruits numerous signaling molecules to form the LAT signalosome. The LAT signalosome propagates signal branching to three major signaling pathways, the calcium, the mitogen-activated protein kinase (MAPK) kinase and the nuclear factor NF-kappa-B (NF-kB) pathways, leading to the mobilization of transcription factors that are critical for gene expression and essential for T cell growth and differentiation. The T cell repertoire is generated in the thymus, by V-(D)-J rearrangement. This repertoire is then shaped by intrathymic selection events to generate a peripheral T cell pool of self-MH restricted, non-autoaggressive T cells. Post-thymic interaction of alpha-beta TR with the pMH complexes shapes TR structural and functional avidity. This chain is T cell receptor alpha variable 27, found in Homo sapiens (Human).